Reading from the N-terminus, the 732-residue chain is Prolyl tripeptidyl peptidase (732 aa).

The N-terminal stretch at 1 to 24 (MKKTIFQQLFLSVCALTVALPCSA) is a signal peptide. Residues serine 603, aspartate 678, and histidine 710 each act as charge relay system in the active site.

Belongs to the peptidase S9B family. In terms of processing, the N-terminus is blocked.

The enzyme catalyses Hydrolysis of Xaa-Xaa-Pro-|-Yaa- releasing the N-terminal tripeptide of a peptide with Pro as the third residue (position P1) and where Yaa is not proline.. With respect to regulation, strongly inhibited by diisopropyl fluorophosphate and Pefabloc. Weakly inhibited by 3,4-dichloroisocumarin. Not inhibited by phenylmethylsulfonyl fluoride, leupeptin, antipain or prolinal. Activated by iodoacetamide. Its function is as follows. Serine proteinase. Releases tripeptides from the free amino terminus of proteins. Has a requirement for Pro in the P1 position, but is inactivated by Pro in the P1' position. The polypeptide is Prolyl tripeptidyl peptidase (Porphyromonas gingivalis (strain ATCC BAA-308 / W83)).